The chain runs to 138 residues: Large ribosomal subunit protein bL19 (138 aa).

It belongs to the bacterial ribosomal protein bL19 family.

This protein is located at the 30S-50S ribosomal subunit interface and may play a role in the structure and function of the aminoacyl-tRNA binding site. This is Large ribosomal subunit protein bL19 from Rickettsia massiliae (strain Mtu5).